A 912-amino-acid chain; its full sequence is DNA ligase 4 (912 aa).

ATP is bound by residues glutamate 271, threonine 272, lysine 273, leucine 274, arginine 278, glutamate 331, lysine 345, phenylalanine 367, glutamate 427, lysine 432, lysine 449, and lysine 451. Residue lysine 273 is the N6-AMP-lysine intermediate of the active site. Mg(2+) is bound at residue glutamate 331. Glutamate 427 serves as a coordination point for Mg(2+). Positions 610-620 (LATKHLHVGDD) are required for catalytic activity. 2 consecutive BRCT domains span residues 654–743 (KVSN…PRFM) and 846–912 (LRFH…QYLL).

This sequence belongs to the ATP-dependent DNA ligase family. In terms of assembly, interacts with XRCC4; the LIG4-XRCC4 subcomplex has a 1:2 stoichiometry and XRCC4 is required for LIG4 stability. Component of the core long-range non-homologous end joining (NHEJ) complex (also named DNA-PK complex) composed of PRKDC, LIG4, XRCC4, XRCC6/Ku70, XRCC5/Ku86 and NHEJ1/XLF. Additional component of the NHEJ complex includes PAXX. Following autophosphorylation, PRKDC dissociates from DNA, leading to formation of the short-range NHEJ complex, composed of LIG4, XRCC4, XRCC6/Ku70, XRCC5/Ku86 and NHEJ1/XLF. Interacts with DCLRE1C; the interaction is direct. Interacts with APLF. Mg(2+) is required as a cofactor.

The protein localises to the nucleus. The catalysed reaction is ATP + (deoxyribonucleotide)n-3'-hydroxyl + 5'-phospho-(deoxyribonucleotide)m = (deoxyribonucleotide)n+m + AMP + diphosphate.. DNA ligase involved in DNA non-homologous end joining (NHEJ); required for double-strand break (DSB) repair and V(D)J recombination. Catalyzes the NHEJ ligation step of the broken DNA during DSB repair by resealing the DNA breaks after the gap filling is completed. Joins single-strand breaks in a double-stranded polydeoxynucleotide in an ATP-dependent reaction. LIG4 is mechanistically flexible: it can ligate nicks as well as compatible DNA overhangs alone, while in the presence of XRCC4, it can ligate ends with 2-nucleotides (nt) microhomology and 1-nt gaps. Forms a subcomplex with XRCC4; the LIG4-XRCC4 subcomplex is responsible for the NHEJ ligation step and XRCC4 enhances the joining activity of LIG4. Binding of the LIG4-XRCC4 complex to DNA ends is dependent on the assembly of the DNA-dependent protein kinase complex DNA-PK to these DNA ends. LIG4 regulates nuclear localization of XRCC4. The protein is DNA ligase 4 of Cricetulus griseus (Chinese hamster).